The primary structure comprises 452 residues: tRNA modification GTPase MnmE (452 aa).

(6S)-5-formyl-5,6,7,8-tetrahydrofolate-binding residues include Arg23, Glu81, and Lys120. The TrmE-type G domain maps to 217–373; the sequence is GIKTAIIGQT…LVLRINQMYL (157 aa). Asn227 contributes to the K(+) binding site. Residues 227–232, 246–252, and 271–274 each bind GTP; these read NVGKSS, TDIPGTT, and DTAG. Ser231 serves as a coordination point for Mg(2+). K(+) is bound by residues Thr246, Ile248, and Thr251. Residue Thr252 participates in Mg(2+) binding. Lys452 serves as a coordination point for (6S)-5-formyl-5,6,7,8-tetrahydrofolate.

This sequence belongs to the TRAFAC class TrmE-Era-EngA-EngB-Septin-like GTPase superfamily. TrmE GTPase family. As to quaternary structure, homodimer. Heterotetramer of two MnmE and two MnmG subunits. K(+) is required as a cofactor.

Its subcellular location is the cytoplasm. Exhibits a very high intrinsic GTPase hydrolysis rate. Involved in the addition of a carboxymethylaminomethyl (cmnm) group at the wobble position (U34) of certain tRNAs, forming tRNA-cmnm(5)s(2)U34. The protein is tRNA modification GTPase MnmE of Mycoplasma mycoides subsp. mycoides SC (strain CCUG 32753 / NCTC 10114 / PG1).